Reading from the N-terminus, the 424-residue chain is Serine--tRNA ligase (424 aa).

Position 230 to 232 (Thr230 to Glu232) interacts with L-serine. Residue Arg261 to Glu263 participates in ATP binding. Glu284 lines the L-serine pocket. Glu348–Ser351 is a binding site for ATP. Ser384 serves as a coordination point for L-serine.

Belongs to the class-II aminoacyl-tRNA synthetase family. Type-1 seryl-tRNA synthetase subfamily. As to quaternary structure, homodimer. The tRNA molecule binds across the dimer.

It is found in the cytoplasm. It carries out the reaction tRNA(Ser) + L-serine + ATP = L-seryl-tRNA(Ser) + AMP + diphosphate + H(+). It catalyses the reaction tRNA(Sec) + L-serine + ATP = L-seryl-tRNA(Sec) + AMP + diphosphate + H(+). It functions in the pathway aminoacyl-tRNA biosynthesis; selenocysteinyl-tRNA(Sec) biosynthesis; L-seryl-tRNA(Sec) from L-serine and tRNA(Sec): step 1/1. Catalyzes the attachment of serine to tRNA(Ser). Is also able to aminoacylate tRNA(Sec) with serine, to form the misacylated tRNA L-seryl-tRNA(Sec), which will be further converted into selenocysteinyl-tRNA(Sec). The sequence is that of Serine--tRNA ligase from Streptococcus pneumoniae (strain 70585).